Reading from the N-terminus, the 179-residue chain is Large ribosomal subunit protein uL5 (179 aa).

Belongs to the universal ribosomal protein uL5 family. In terms of assembly, part of the 50S ribosomal subunit; part of the 5S rRNA/L5/L18/L25 subcomplex. Contacts the 5S rRNA and the P site tRNA. Forms a bridge to the 30S subunit in the 70S ribosome.

This is one of the proteins that bind and probably mediate the attachment of the 5S RNA into the large ribosomal subunit, where it forms part of the central protuberance. In the 70S ribosome it contacts protein S13 of the 30S subunit (bridge B1b), connecting the 2 subunits; this bridge is implicated in subunit movement. Contacts the P site tRNA; the 5S rRNA and some of its associated proteins might help stabilize positioning of ribosome-bound tRNAs. The sequence is that of Large ribosomal subunit protein uL5 from Buchnera aphidicola subsp. Schizaphis graminum (strain Sg).